Consider the following 501-residue polypeptide: ATP-dependent rRNA helicase RRP3 (501 aa).

Residues 3 to 44 (KIVKRKEKKANDELTSLAEKIRAKALENQKKLIEAEKEGGSE) adopt a coiled-coil conformation. Positions 36-79 (EAEKEGGSESDSEEDATAEKKKVLKSKSKSTVSTQNENTNEDES) are disordered. 3 positions are modified to phosphoserine: S43, S45, and S47. The Q motif motif lies at 81 to 109 (ESFSELNLVPELIQACKNLNYSKPTPIQS). Residues 112-284 (IPPALEGHDI…RASLTNPVKC (173 aa)) enclose the Helicase ATP-binding domain. 125 to 132 (AQTGSGKT) serves as a coordination point for ATP. The DEAD box motif lies at 231 to 234 (DEAD). Residues 307–461 (LKNTYLIYLL…NIILTLRDSV (155 aa)) enclose the Helicase C-terminal domain. Positions 480–501 (IARGKGRRGRMMTRENMDMGER) are disordered. The span at 491–501 (MTRENMDMGER) shows a compositional bias: basic and acidic residues.

Belongs to the DEAD box helicase family. DDX47/RRP3 subfamily. In terms of assembly, interacts with the SSU processome.

The protein resides in the nucleus. It carries out the reaction ATP + H2O = ADP + phosphate + H(+). In terms of biological role, ATP-dependent rRNA helicase required for pre-ribosomal RNA processing. Involved in the maturation of the 35S-pre-rRNA and to its cleavage to mature 18S rRNA. The chain is ATP-dependent rRNA helicase RRP3 from Saccharomyces cerevisiae (strain YJM789) (Baker's yeast).